Here is a 245-residue protein sequence, read N- to C-terminus: Protein crossbronx (245 aa).

Residues 20 to 177 (QQEYKILAEY…VQESIVESKS (158 aa)) form the UBC core domain.

This sequence belongs to the ubiquitin-conjugating enzyme family. FTS subfamily.

This chain is Protein crossbronx (cbx), found in Drosophila virilis (Fruit fly).